The sequence spans 307 residues: Glutenin, low molecular weight subunit 1D1 (307 aa).

The N-terminal stretch at 1 to 23 (MKTFLVFALLAVAATSAIAQMET) is a signal peptide. Disordered stretches follow at residues 31–88 (RPWQ…ILPQ) and 105–126 (PFSQQQQPVLPPQQSPFPQQQQ). A compositionally biased stretch (low complexity) spans 43–88 (TFPQQPLFSQQQQQQLFPQQPSFSQQQPPFWQQQPPFSQQQPILPQ).

The protein belongs to the gliadin/glutenin family. As to quaternary structure, disulfide-bridge linked aggregates. Expressed in endosperm, but not in husk and leaf tissues.

Glutenins are high-molecular weight seed storage proteins of wheat endosperm. Thought to be responsible for the visco-elastic property of wheat dough. This Triticum aestivum (Wheat) protein is Glutenin, low molecular weight subunit 1D1.